Reading from the N-terminus, the 231-residue chain is Verlamelin biosynthesis protein B (231 aa).

Its pathway is secondary metabolite biosynthesis. Functionally, part of the gene cluster that mediates the biosynthesis of verlamelin, a lipopeptide that exhibits antifungal activity against plant pathogenic fungi. Verlamelin is a cyclic hexadepsipeptide and is bridged by ester bonding between a 5-hydroxytetradecanoic acid moiety and a carboxyl group on the terminal Val of amide-bonded tetradecanoyl-hexapeptide D-allo-Thr-D-Ala-L-Pro-L-Gln-D-Tyr-L-Val. VlmA and vlmB are altogether regarded as essential components in the biosynthesis of 5-hydroxytetradecanoic acid. VlmA catalyzes the hydroxylation at position C5 of tetradecanoic acid produced in primary metabolism, while the precise function of vlmB still remains to be solved. To be loaded onto the waiting NRPS, 5-hydroxytetradecanoic acid is activated in the form of acyladenylate by the AMP-dependent ligase vlmC. VlmS seems to accept the fatty-acyl intermediate onto the initial module to further elongate amino acid residues by the downstream modules. In addition, in the last module at its C-terminus, vlmS contains a surplus condensation (C) domain that may be involved in cyclization, the last step to form verlamelin. The sequence is that of Verlamelin biosynthesis protein B from Lecanicillium sp.